A 587-amino-acid polypeptide reads, in one-letter code: V-type proton ATPase catalytic subunit A (587 aa).

Residue 243–250 coordinates ATP; sequence GAFGCGKT.

This sequence belongs to the ATPase alpha/beta chains family. V-ATPase is a heteromultimeric enzyme composed of a peripheral catalytic V1 complex (main components: subunits A, B, C, D, E, and F) attached to an integral membrane V0 proton pore complex (main component: the proteolipid protein).

It catalyses the reaction ATP + H2O + 4 H(+)(in) = ADP + phosphate + 5 H(+)(out). Catalytic subunit of the peripheral V1 complex of vacuolar ATPase. V-ATPase vacuolar ATPase is responsible for acidifying a variety of intracellular compartments in eukaryotic cells. This Cyanidium caldarium (Red alga) protein is V-type proton ATPase catalytic subunit A.